The sequence spans 93 residues: Pancreatic polypeptide prohormone (93 aa).

A signal peptide spans Met1–Gly29. Residue Tyr65 is modified to Tyrosine amide. Positions Glu89–Glu93 are excised as a propeptide.

This sequence belongs to the NPY family.

It is found in the secreted. Its function is as follows. Hormone secreted by pancreatic cells that acts as a regulator of pancreatic and gastrointestinal functions probably by signaling through the G protein-coupled receptor NPY4R2. This is Pancreatic polypeptide prohormone (PPY) from Canis lupus familiaris (Dog).